Reading from the N-terminus, the 326-residue chain is tRNA U34 carboxymethyltransferase (326 aa).

Carboxy-S-adenosyl-L-methionine is bound by residues lysine 95, tryptophan 109, lysine 114, glycine 134, 184–185 (VE), tyrosine 204, and arginine 319.

Belongs to the class I-like SAM-binding methyltransferase superfamily. CmoB family.

It carries out the reaction carboxy-S-adenosyl-L-methionine + 5-hydroxyuridine(34) in tRNA = 5-carboxymethoxyuridine(34) in tRNA + S-adenosyl-L-homocysteine + H(+). Catalyzes carboxymethyl transfer from carboxy-S-adenosyl-L-methionine (Cx-SAM) to 5-hydroxyuridine (ho5U) to form 5-carboxymethoxyuridine (cmo5U) at position 34 in tRNAs. The sequence is that of tRNA U34 carboxymethyltransferase from Trichodesmium erythraeum (strain IMS101).